We begin with the raw amino-acid sequence, 505 residues long: Flagellin (505 aa).

The protein belongs to the bacterial flagellin family.

The protein resides in the secreted. The protein localises to the bacterial flagellum. Its function is as follows. Flagellin is the subunit protein which polymerizes to form the filaments of bacterial flagella. The polypeptide is Flagellin (fliC) (Salmonella dublin).